We begin with the raw amino-acid sequence, 1083 residues long: uncharacterized protein (1083 aa).

The interval 93-145 is disordered; it reads SKGNLRYVPTTSRNPSNTDTYSSSIDISSSSSSINTSDDSSGKTSSNDLSDMS. Over residues 108-145 the composition is skewed to low complexity; the sequence is SNTDTYSSSIDISSSSSSINTSDDSSGKTSSNDLSDMS.

The protein resides in the virion. This is an uncharacterized protein from Acanthamoeba polyphaga (Amoeba).